Consider the following 568-residue polypeptide: Delta 8-(E)-sphingolipid desaturase (568 aa).

Residues D2 to D77 form the Cytochrome b5 heme-binding domain. 2 residues coordinate heme: H37 and H60. The next 2 helical transmembrane spans lie at F241 to A261 and L272 to W292. Residues H259–H263 carry the Histidine box-1 motif. The Histidine box-2 signature appears at H296–H300. 3 helical membrane passes run Y352–L377, Y389–C409, and I421–A441. The short motif at Q480–H484 is the Histidine box-3 element. Residues A549–Y560 are compositionally biased toward basic and acidic residues. Positions A549–A568 are disordered.

The protein belongs to the fatty acid desaturase type 1 family.

The protein localises to the membrane. It catalyses the reaction an N-acylsphing-4-enine + 2 Fe(II)-[cytochrome b5] + O2 + 2 H(+) = a (4E,8E)-4-sphinga-4,8-dienine ceramide + 2 Fe(III)-[cytochrome b5] + 2 H2O. It participates in lipid metabolism; sphingolipid metabolism. In terms of biological role, delta(8)-fatty-acid desaturase which introduces a double bond at the 8-position in the long-chain base (LCB) of ceramides. Required for the formation of the di-unsaturated sphingoid base (E,E)-sphinga-4,8-dienine during glucosylceramide (GluCer) biosynthesis. The sequence is that of Delta 8-(E)-sphingolipid desaturase from Lachancea kluyveri (strain ATCC 58438 / CBS 3082 / BCRC 21498 / NBRC 1685 / JCM 7257 / NCYC 543 / NRRL Y-12651) (Yeast).